Reading from the N-terminus, the 232-residue chain is 2-C-methyl-D-erythritol 4-phosphate cytidylyltransferase (232 aa).

It belongs to the IspD/TarI cytidylyltransferase family. IspD subfamily.

It carries out the reaction 2-C-methyl-D-erythritol 4-phosphate + CTP + H(+) = 4-CDP-2-C-methyl-D-erythritol + diphosphate. The protein operates within isoprenoid biosynthesis; isopentenyl diphosphate biosynthesis via DXP pathway; isopentenyl diphosphate from 1-deoxy-D-xylulose 5-phosphate: step 2/6. Catalyzes the formation of 4-diphosphocytidyl-2-C-methyl-D-erythritol from CTP and 2-C-methyl-D-erythritol 4-phosphate (MEP). This is 2-C-methyl-D-erythritol 4-phosphate cytidylyltransferase from Nitrosospira multiformis (strain ATCC 25196 / NCIMB 11849 / C 71).